Reading from the N-terminus, the 264-residue chain is Small ribosomal subunit protein uS2 (264 aa).

The protein belongs to the universal ribosomal protein uS2 family.

The protein is Small ribosomal subunit protein uS2 of Latilactobacillus sakei subsp. sakei (strain 23K) (Lactobacillus sakei subsp. sakei).